The primary structure comprises 103 residues: ATP synthase F(0) complex subunit g, mitochondrial (103 aa).

Position 2 is an N-acetylalanine (A2). 4 positions are modified to N6-acetyllysine: K11, K24, K35, and K54.

In terms of assembly, component of the ATP synthase complex composed at least of ATP5F1A/subunit alpha, ATP5F1B/subunit beta, ATP5MC1/subunit c (homooctomer), MT-ATP6/subunit a, MT-ATP8/subunit 8, ATP5ME/subunit e, ATP5MF/subunit f, ATP5MG/subunit g, ATP5MK/subunit k, ATP5MJ/subunit j, ATP5F1C/subunit gamma, ATP5F1D/subunit delta, ATP5F1E/subunit epsilon, ATP5PF/subunit F6, ATP5PB/subunit b, ATP5PD/subunit d, ATP5PO/subunit OSCP. ATP synthase complex consists of a soluble F(1) head domain (subunits alpha(3) and beta(3)) - the catalytic core - and a membrane F(0) domain - the membrane proton channel (subunits c, a, 8, e, f, g, k and j). These two domains are linked by a central stalk (subunits gamma, delta, and epsilon) rotating inside the F1 region and a stationary peripheral stalk (subunits F6, b, d, and OSCP).

The protein resides in the mitochondrion. Its subcellular location is the mitochondrion inner membrane. Subunit g, of the mitochondrial membrane ATP synthase complex (F(1)F(0) ATP synthase or Complex V) that produces ATP from ADP in the presence of a proton gradient across the membrane which is generated by electron transport complexes of the respiratory chain. ATP synthase complex consist of a soluble F(1) head domain - the catalytic core - and a membrane F(1) domain - the membrane proton channel. These two domains are linked by a central stalk rotating inside the F(1) region and a stationary peripheral stalk. During catalysis, ATP synthesis in the catalytic domain of F(1) is coupled via a rotary mechanism of the central stalk subunits to proton translocation. In vivo, can only synthesize ATP although its ATP hydrolase activity can be activated artificially in vitro. Part of the complex F(0) domain. This Bos taurus (Bovine) protein is ATP synthase F(0) complex subunit g, mitochondrial.